Consider the following 107-residue polypeptide: U1-lycotoxin-Ls1n (107 aa).

The N-terminal stretch at 1 to 20 (MMKVLVVVALLVTLISYSSS) is a signal peptide. The propeptide occupies 21–41 (EGIDDLEADELLSLMANEQTR). 4 disulfide bridges follow: cysteine 44-cysteine 59, cysteine 51-cysteine 68, cysteine 58-cysteine 86, and cysteine 70-cysteine 84.

Belongs to the neurotoxin 19 (CSTX) family. 04 (U1-Lctx) subfamily. Expressed by the venom gland.

It localises to the secreted. This is U1-lycotoxin-Ls1n from Lycosa singoriensis (Wolf spider).